A 114-amino-acid polypeptide reads, in one-letter code: Lymphotactin (114 aa).

Positions 1-21 are cleaved as a signal peptide; that stretch reads MRLLLLTFLGVCCLTPWVVEG. Cysteine 32 and cysteine 69 are disulfide-bonded. Residues 92–114 are disordered; it reads KNMAETVPTGAQRSTSTAITLTG. A compositionally biased stretch (polar residues) spans 100-114; sequence TGAQRSTSTAITLTG.

It belongs to the intercrine gamma family. As to expression, expressed in activated CD8(+) T cells. In the thymus, expressed by medullary thymic epithelial cells.

The protein localises to the secreted. In terms of biological role, chemotactic activity for lymphocytes but not for monocytes or neutrophils. In thymus, mediates medullary accumulation of thymic dendritic cells and contributes to regulatoy T cell development, playing a role in self-tolerance establishment. The protein is Lymphotactin (Xcl1) of Mus musculus (Mouse).